We begin with the raw amino-acid sequence, 163 residues long: Nucleotide-binding protein LA_3406 (163 aa).

It belongs to the YajQ family.

Its function is as follows. Nucleotide-binding protein. This is Nucleotide-binding protein LA_3406 from Leptospira interrogans serogroup Icterohaemorrhagiae serovar Lai (strain 56601).